The sequence spans 452 residues: Isocitrate dehydrogenase [NADP], mitochondrial (452 aa).

The N-terminal 39 residues, 1-39 (MAGYLRVVRSLCRASGSRPAWAPAALTAPTSQEQTRRHY), are a transit peptide targeting the mitochondrion. K45, K48, K67, and K69 each carry N6-acetyllysine. 2 positions are modified to N6-acetyllysine; alternate: K80 and K106. Residues K80 and K106 each carry the N6-succinyllysine; alternate modification. NADP(+)-binding positions include 115 to 117 (TIT) and R122. Residue T117 coordinates substrate. Substrate contacts are provided by residues 134 to 140 (SPNGTIR) and R149. K155 is subject to N6-acetyllysine. K166 is subject to N6-acetyllysine; alternate. Position 166 is an N6-succinyllysine; alternate (K166). Position 172 (R172) interacts with substrate. An N6-acetyllysine; alternate mark is found at K180 and K193. N6-succinyllysine; alternate occurs at positions 180 and 193. An N6-acetyllysine modification is found at K199. Residue K256 is modified to N6-acetyllysine; alternate. The residue at position 256 (K256) is an N6-succinyllysine; alternate. An N6-acetyllysine mark is found at K263, K272, K275, and K280. An N6-acetyllysine; alternate modification is found at K282. K282 is modified (N6-succinyllysine; alternate). Mn(2+) is bound at residue D291. K299 provides a ligand contact to NADP(+). D314 lines the Mn(2+) pocket. NADP(+) is bound by residues 349-354 (GTVTRH) and N367. N6-acetyllysine; alternate is present on K384. The residue at position 384 (K384) is an N6-succinyllysine; alternate. An N6-acetyllysine mark is found at K400, K413, and K442.

Belongs to the isocitrate and isopropylmalate dehydrogenases family. As to quaternary structure, homodimer. The cofactor is Mg(2+). It depends on Mn(2+) as a cofactor. Post-translationally, acetylation at Lys-413 dramatically reduces catalytic activity. Deacetylated by SIRT3.

The protein localises to the mitochondrion. The enzyme catalyses D-threo-isocitrate + NADP(+) = 2-oxoglutarate + CO2 + NADPH. Its function is as follows. Plays a role in intermediary metabolism and energy production. It may tightly associate or interact with the pyruvate dehydrogenase complex. This Macaca fascicularis (Crab-eating macaque) protein is Isocitrate dehydrogenase [NADP], mitochondrial (IDH2).